A 1049-amino-acid chain; its full sequence is Bifunctional cytochrome P450/NADPH--P450 reductase (1049 aa).

Positions T2 to R472 are cytochrome P450. Y52 is a (9Z)-hexadecenoate binding site. C401 contacts heme. Residues K473–G1049 are NADPH--P450 reductase. The 140-residue stretch at L483–W622 folds into the Flavodoxin-like domain. Residues S489–A494, S536–G539, C570–D572, and T578–Q580 each bind FMN. Positions H660–P892 constitute an FAD-binding FR-type domain.

The protein in the N-terminal section; belongs to the cytochrome P450 family. It depends on FAD as a cofactor. FMN is required as a cofactor. The cofactor is heme.

It is found in the cytoplasm. The catalysed reaction is 2 oxidized [cytochrome P450] + NADPH = 2 reduced [cytochrome P450] + NADP(+) + H(+). It carries out the reaction an organic molecule + reduced [NADPH--hemoprotein reductase] + O2 = an alcohol + oxidized [NADPH--hemoprotein reductase] + H2O + H(+). With respect to regulation, inhibited by N-(12-imidazolyl-dodecanoyl)-L-leucine. Functions as a fatty acid monooxygenase. Catalyzes hydroxylation of fatty acids at omega-1, omega-2 and omega-3 positions. Shows activity toward medium and long-chain fatty acids, with optimum chain lengths of 12, 14 and 16 carbons (lauric, myristic, and palmitic acids). Able to metabolize some of these primary metabolites to secondary and tertiary products. Marginal activity towards short chain lengths of 8-10 carbons. Hydroxylates highly branched fatty acids, which play an essential role in membrane fluidity regulation. Also displays a NADPH-dependent reductase activity in the C-terminal domain, which allows electron transfer from NADPH to the heme iron of the cytochrome P450 N-terminal domain. Involved in inactivation of quorum sensing signals of other competing bacteria by oxidazing efficiently acyl homoserine lactones (AHLs), molecules involved in quorum sensing signaling pathways, and their lactonolysis products acyl homoserines (AHs). The polypeptide is Bifunctional cytochrome P450/NADPH--P450 reductase (Priestia megaterium (strain ATCC 14581 / DSM 32 / CCUG 1817 / JCM 2506 / NBRC 15308 / NCIMB 9376 / NCTC 10342 / NRRL B-14308 / VKM B-512 / Ford 19) (Bacillus megaterium)).